The following is a 358-amino-acid chain: 3-dehydroquinate synthase (358 aa).

Residues 69–74, 103–107, 127–128, lysine 140, lysine 149, and 167–170 contribute to the NAD(+) site; these read DGEQYK, GVIGD, TT, and TLNT. Residues glutamate 182, histidine 245, and histidine 262 each coordinate Zn(2+).

This sequence belongs to the sugar phosphate cyclases superfamily. Dehydroquinate synthase family. Co(2+) is required as a cofactor. Zn(2+) serves as cofactor. Requires NAD(+) as cofactor.

It localises to the cytoplasm. The enzyme catalyses 7-phospho-2-dehydro-3-deoxy-D-arabino-heptonate = 3-dehydroquinate + phosphate. The protein operates within metabolic intermediate biosynthesis; chorismate biosynthesis; chorismate from D-erythrose 4-phosphate and phosphoenolpyruvate: step 2/7. Functionally, catalyzes the conversion of 3-deoxy-D-arabino-heptulosonate 7-phosphate (DAHP) to dehydroquinate (DHQ). This is 3-dehydroquinate synthase from Hydrogenovibrio crunogenus (strain DSM 25203 / XCL-2) (Thiomicrospira crunogena).